Reading from the N-terminus, the 158-residue chain is MGINYSVKADPETTARGMLRDRPISLKHSKAIAREIKGMTIADAESYLDDVIAQRQSVPFRQHNSGVGHRSDIDGWDAGRYPEKASKAFLELIENVASNANEQGFDGNAMAIRHVAAHKVGERQGRKPRAFGSADPWNTTICDVELIIEQPGTDGVDI.

It belongs to the universal ribosomal protein uL22 family. In terms of assembly, part of the 50S ribosomal subunit.

This protein binds specifically to 23S rRNA. It makes multiple contacts with different domains of the 23S rRNA in the assembled 50S subunit and ribosome. In terms of biological role, the globular domain of the protein is located near the polypeptide exit tunnel on the outside of the subunit, while an extended beta-hairpin is found that lines the wall of the exit tunnel in the center of the 70S ribosome. This Haloquadratum walsbyi (strain DSM 16790 / HBSQ001) protein is Large ribosomal subunit protein uL22.